We begin with the raw amino-acid sequence, 352 residues long: Chorismate synthase (352 aa).

NADP(+) is bound at residue arginine 48. FMN-binding positions include 125–127 (RSS), 238–239 (NA), glycine 278, 293–297 (KPTSS), and arginine 319.

It belongs to the chorismate synthase family. In terms of assembly, homotetramer. The cofactor is FMNH2.

The catalysed reaction is 5-O-(1-carboxyvinyl)-3-phosphoshikimate = chorismate + phosphate. Its pathway is metabolic intermediate biosynthesis; chorismate biosynthesis; chorismate from D-erythrose 4-phosphate and phosphoenolpyruvate: step 7/7. In terms of biological role, catalyzes the anti-1,4-elimination of the C-3 phosphate and the C-6 proR hydrogen from 5-enolpyruvylshikimate-3-phosphate (EPSP) to yield chorismate, which is the branch point compound that serves as the starting substrate for the three terminal pathways of aromatic amino acid biosynthesis. This reaction introduces a second double bond into the aromatic ring system. The chain is Chorismate synthase from Legionella pneumophila subsp. pneumophila (strain Philadelphia 1 / ATCC 33152 / DSM 7513).